The sequence spans 275 residues: Orotidine 5'-phosphate decarboxylase (275 aa).

Residue lysine 95 is the Proton donor of the active site.

The protein belongs to the OMP decarboxylase family. Type 2 subfamily.

It carries out the reaction orotidine 5'-phosphate + H(+) = UMP + CO2. The protein operates within pyrimidine metabolism; UMP biosynthesis via de novo pathway; UMP from orotate: step 2/2. In Delftia acidovorans (strain DSM 14801 / SPH-1), this protein is Orotidine 5'-phosphate decarboxylase.